The chain runs to 598 residues: Elongation factor 4 (598 aa).

One can recognise a tr-type G domain in the interval 2-184 (QHIRNFSIIA…AIVARVPAPK (183 aa)). Residues 14 to 19 (DHGKST) and 131 to 134 (NKID) each bind GTP.

This sequence belongs to the TRAFAC class translation factor GTPase superfamily. Classic translation factor GTPase family. LepA subfamily.

It is found in the cell inner membrane. It carries out the reaction GTP + H2O = GDP + phosphate + H(+). Functionally, required for accurate and efficient protein synthesis under certain stress conditions. May act as a fidelity factor of the translation reaction, by catalyzing a one-codon backward translocation of tRNAs on improperly translocated ribosomes. Back-translocation proceeds from a post-translocation (POST) complex to a pre-translocation (PRE) complex, thus giving elongation factor G a second chance to translocate the tRNAs correctly. Binds to ribosomes in a GTP-dependent manner. The protein is Elongation factor 4 of Azoarcus sp. (strain BH72).